A 518-amino-acid chain; its full sequence is Histone deacetylase 1 (518 aa).

A histone deacetylase region spans residues 22–333 (RRVCYFYDAE…WCYETGVALG (312 aa)). The active-site Proton donor/acceptor is His153. The Zn(2+) site is built by Asp188, His190, and Asp276. A disordered region spans residues 387-518 (HAPSVQFQER…QDQPSVHQKT (132 aa)). Residues 401–412 (ELPEQDEDQEDP) show a composition bias toward acidic residues. Over residues 413–435 (DERHHADSDVEMDDVKPLDDSGR) the composition is skewed to basic and acidic residues. Over residues 503–518 (DNSNKLQDQPSVHQKT) the composition is skewed to polar residues.

This sequence belongs to the histone deacetylase family. HD Type 1 subfamily. Interacts with TPR3. Requires Zn(2+) as cofactor. Expressed in roots and leaves.

It is found in the nucleus. The enzyme catalyses N(6)-acetyl-L-lysyl-[histone] + H2O = L-lysyl-[histone] + acetate. In terms of biological role, responsible for the deacetylation of lysine residues on the N-terminal part of the core histones (H2A, H2B, H3 and H4). Histone deacetylation gives a tag for epigenetic repression and plays an important role in transcriptional regulation, cell cycle progression and developmental events. Histone deacetylases act via the formation of large multiprotein complexes. Negatively regulates the expression of the NAC48/NAC6 gene that controls root growth in seedlings. Epigenetically represses the expression of NAC48/NAC6 by deacetylating 'Lys-9' (H3K9ac), 'Lys-14' (H3K14ac) and 'Lys-18' (H3K18ac) of histone H3, and 'Lys-5' (H4K5ac), 'Lys-12' (H4K12ac) and 'Lys-16' (H4K16ac) of histone H4. Functions in the regulation of gene expression in the whole genome. Acts as a chromatin remodeling regulator to promote the formation of a repressive chromatin state. Functions with MODD via its interaction with TPR3, to down-regulates the histone acetylation level at BZIP46 target genes. BZIP46 is a positive regulator of abscisic acid (ABA) signaling and drought stress tolerance. This chain is Histone deacetylase 1, found in Oryza sativa subsp. japonica (Rice).